The following is a 191-amino-acid chain: Xanthine phosphoribosyltransferase (191 aa).

Xanthine contacts are provided by L20 and N27. 128–132 (ANGQA) is a binding site for 5-phospho-alpha-D-ribose 1-diphosphate. A xanthine-binding site is contributed by K156.

The protein belongs to the purine/pyrimidine phosphoribosyltransferase family. Xpt subfamily. As to quaternary structure, homodimer.

It is found in the cytoplasm. The enzyme catalyses XMP + diphosphate = xanthine + 5-phospho-alpha-D-ribose 1-diphosphate. Its pathway is purine metabolism; XMP biosynthesis via salvage pathway; XMP from xanthine: step 1/1. Functionally, converts the preformed base xanthine, a product of nucleic acid breakdown, to xanthosine 5'-monophosphate (XMP), so it can be reused for RNA or DNA synthesis. In Levilactobacillus brevis (strain ATCC 367 / BCRC 12310 / CIP 105137 / JCM 1170 / LMG 11437 / NCIMB 947 / NCTC 947) (Lactobacillus brevis), this protein is Xanthine phosphoribosyltransferase.